Reading from the N-terminus, the 171-residue chain is Small ribosomal subunit protein uS5 (171 aa).

An S5 DRBM domain is found at 15–78; it reads YEEKVVKIKR…EKAKKQLIRI (64 aa).

This sequence belongs to the universal ribosomal protein uS5 family. In terms of assembly, part of the 30S ribosomal subunit. Contacts proteins S4 and S8.

Its function is as follows. With S4 and S12 plays an important role in translational accuracy. Located at the back of the 30S subunit body where it stabilizes the conformation of the head with respect to the body. This chain is Small ribosomal subunit protein uS5, found in Phytoplasma australiense.